The chain runs to 1936 residues: Trinucleotide repeat-containing gene 6C protein (1936 aa).

The span at 1–31 (MEEKKKKKQEEKKKKEGAQKKAADQKTKVPE) shows a compositional bias: basic and acidic residues. Disordered stretches follow at residues 1 to 160 (MEEK…PTYR), 181 to 256 (PSIT…NSNG), 366 to 412 (PQES…AMQT), 439 to 931 (NGSS…IRRK), 961 to 1063 (VIQS…VAFG), and 1115 to 1139 (ESTS…KTSG). Positions 34–44 (KTCSSQPQPAG) are enriched in polar residues. Positions 45 to 57 (TSTSTSTSTISSS) are enriched in low complexity. Positions 58–71 (NNGKRASASGQQPA) are enriched in polar residues. The segment covering 76 to 88 (LPREVPPRFRQQE) has biased composition (basic and acidic residues). Polar residues-rich tracts occupy residues 100-111 (PTGTLTSVSPTQ) and 183-217 (ITGT…GSAQ). Positions 211–1133 (MATGSAQGNF…GNAPKKGLQK (923 aa)) are sufficient for interaction with argonaute family proteins. Residues 218–235 (GNFTGHTKKTNGNNGTNG) show a composition bias toward low complexity. Over residues 366-393 (PQESTEPQTSTSQNVSFSAQPQNLNTDG) the composition is skewed to polar residues. Composition is skewed to low complexity over residues 394–408 (PNNT…NPIN), 439–453 (NGSS…SAEG), and 469–480 (GNSNSGFSQGNG). Over residues 481 to 498 (DTVNSALSAKQNGSSSAV) the composition is skewed to polar residues. R523 bears the Omega-N-methylarginine mark. Residues 572-585 (GWESPSVTSQNPTV) are compositionally biased toward polar residues. Low complexity predominate over residues 594–614 (SWAKAASSGTTASEGSSDGSG). Over residues 625 to 636 (GTGEGRRRDKGI) the composition is skewed to basic and acidic residues. A compositionally biased stretch (polar residues) spans 654 to 669 (LSNTGWGQTPVKQNTA). The span at 674-684 (ESPRSERKNDN) shows a compositional bias: basic and acidic residues. Residue S675 is modified to Phosphoserine. Over residues 694–718 (TQASNSGGKNDGSIMNSTNTSSVSG) the composition is skewed to polar residues. Low complexity-rich tracts occupy residues 720-730 (VNAPPAAVPAN) and 750-772 (SISS…SGAA). 2 stretches are compositionally biased toward polar residues: residues 834-866 (NRSG…TNWG) and 873-888 (PQQN…NVSN). S924 carries the post-translational modification Phosphoserine. The segment covering 964–982 (SSTTTNTTTTTTTTTSNTT) has biased composition (low complexity). Position 987 is a phosphothreonine (T987). Residues 1021–1035 (ENSWGEPSSPSTLVD) are compositionally biased toward polar residues. One can recognise a UBA domain in the interval 1140-1185 (KQDEAWIMSRLIKQLTDMGFPREPAEEALKSNNMNLDQAMSALLEK). S1218 is subject to Phosphoserine. Disordered regions lie at residues 1291 to 1312 (AAQA…NSSQ), 1419 to 1658 (VKQP…PSSS), 1689 to 1732 (STWS…PSST), and 1848 to 1869 (TSSW…GSSH). Residues 1388-1419 (MRQQEQQVARTITNLQQQIQQHQRQLAQALLV) adopt a coiled-coil conformation. Pro residues predominate over residues 1421-1430 (QPPPPPPPPH). The segment at 1467–1936 (NTFAPYPLAG…PGDLLSGESL (470 aa)) is silencing domain; interaction with CNOT1 and PAN3. Over residues 1496–1515 (DPSQSQSRLPQWTHPNSMDN) the composition is skewed to polar residues. The required for interaction with PABPC1 stretch occupies residues 1578–1624 (KSDSDKISNGSSINWPPEFHPGVPWKGLQNIDPENDPDVTPGSVPTG). A sufficient for translational repression when tethered to a target mRNA region spans residues 1578–1936 (KSDSDKISNG…PGDLLSGESL (359 aa)). The interval 1588 to 1606 (SSINWPPEFHPGVPWKGLQ) is PABPC1-interacting motif-2 (PAM2). Polar residues predominate over residues 1623–1633 (TGPTINTTIQD). Low complexity predominate over residues 1641–1658 (SGGSSPPSSQNATLPSSS). A compositionally biased stretch (polar residues) spans 1689 to 1703 (STWSSGPTSHTQASL). The RRM domain occupies 1811–1878 (AQKSLHMCVL…HGLVRSDAGH (68 aa)). Residues 1842–1936 (GQALPPTSSW…PGDLLSGESL (95 aa)) are interaction with the CCR4-NOT complex. Positions 1848-1865 (TSSWQSSSASSQPRLSAA) are enriched in low complexity.

The protein belongs to the GW182 family. In terms of assembly, interacts with one or more of the argonaute family proteins AGO1, AGO2, AGO3 and AGO4. Interacts with PABPC1 and EIF4G1. Interacts with CNOT1; the interaction is direct and mediates the association with the CCR4-NOT complex. Interacts with PAN3; the interaction mediates the association with the PAN complex.

Plays a role in RNA-mediated gene silencing by micro-RNAs (miRNAs). Required for miRNA-dependent translational repression of complementary mRNAs by argonaute family proteins. As scaffoldng protein associates with argonaute proteins bound to partially complementary mRNAs and simultaneously can recruit CCR4-NOT and PAN deadenylase complexes. This Homo sapiens (Human) protein is Trinucleotide repeat-containing gene 6C protein (TNRC6C).